The sequence spans 3096 residues: Cilia- and flagella-associated protein 54 (3096 aa).

Low complexity predominate over residues 1–45; sequence MAAQGSPSSSPSDDSTTSGSLPELPPTSTATSRSPPESKGSSRSS. 2 disordered regions span residues 1–46 and 1248–1267; these read MAAQ…RSSL and SNEQEEMPEEDSSKKSLKTK.

Belongs to the CFAP54 family.

Its subcellular location is the cytoplasm. The protein resides in the cytoskeleton. It is found in the cilium axoneme. In terms of biological role, required for assembly and function of cilia and flagella. The sequence is that of Cilia- and flagella-associated protein 54 from Homo sapiens (Human).